The primary structure comprises 475 residues: tRNA-2-methylthio-N(6)-dimethylallyladenosine synthase (475 aa).

Residues 2–119 (AKLHITTWGC…LPEMINQIRS (118 aa)) form the MTTase N-terminal domain. The [4Fe-4S] cluster site is built by Cys-11, Cys-48, Cys-82, Cys-156, Cys-160, and Cys-163. One can recognise a Radical SAM core domain in the interval 142 to 374 (KAEGPTAFVS…QQRINHQAMQ (233 aa)). Positions 377-440 (RLMLGTEQRI…SNSLRGEVIR (64 aa)) constitute a TRAM domain.

This sequence belongs to the methylthiotransferase family. MiaB subfamily. Monomer. [4Fe-4S] cluster serves as cofactor.

The protein resides in the cytoplasm. The enzyme catalyses N(6)-dimethylallyladenosine(37) in tRNA + (sulfur carrier)-SH + AH2 + 2 S-adenosyl-L-methionine = 2-methylsulfanyl-N(6)-dimethylallyladenosine(37) in tRNA + (sulfur carrier)-H + 5'-deoxyadenosine + L-methionine + A + S-adenosyl-L-homocysteine + 2 H(+). In terms of biological role, catalyzes the methylthiolation of N6-(dimethylallyl)adenosine (i(6)A), leading to the formation of 2-methylthio-N6-(dimethylallyl)adenosine (ms(2)i(6)A) at position 37 in tRNAs that read codons beginning with uridine. In Haemophilus ducreyi (strain 35000HP / ATCC 700724), this protein is tRNA-2-methylthio-N(6)-dimethylallyladenosine synthase.